We begin with the raw amino-acid sequence, 274 residues long: Penicillin-insensitive murein endopeptidase (274 aa).

The signal sequence occupies residues 1 to 19 (MNKTAIALLALLASSASLA). Disulfide bonds link Cys-44–Cys-265, Cys-187–Cys-235, and Cys-216–Cys-223. The Zn(2+) site is built by His-110, His-113, Asp-120, Asp-147, His-150, and His-211. The disordered stretch occupies residues 227–274 (PLPPPGDGCGAELQSWFEPPKPGTTKPEKKTPPPLPPSCQALLDEHVI).

The protein belongs to the peptidase M74 family. In terms of assembly, dimer. Requires Zn(2+) as cofactor.

It localises to the periplasm. In terms of biological role, murein endopeptidase that cleaves the D-alanyl-meso-2,6-diamino-pimelyl amide bond that connects peptidoglycan strands. Likely plays a role in the removal of murein from the sacculus. The sequence is that of Penicillin-insensitive murein endopeptidase from Escherichia coli O9:H4 (strain HS).